The primary structure comprises 527 residues: Probable feruloyl esterase B (527 aa).

The signal sequence occupies residues 1–19 (MALLRHLLPVLTVGSAVQS). 2 disulfides stabilise this stretch: Cys-31-Cys-76 and Cys-65-Cys-115. 3 N-linked (GlcNAc...) asparagine glycosylation sites follow: Asn-56, Asn-86, and Asn-139. Cystine bridges form between Cys-188/Cys-442, Cys-257/Cys-274, Cys-283/Cys-292, and Cys-504/Cys-526. Ser-189 (acyl-ester intermediate) is an active-site residue. Ca(2+) is bound by residues Asp-258, Asp-261, Ala-263, Asp-265, and Ile-267. N-linked (GlcNAc...) asparagine glycosylation occurs at Asn-277. Asn-312 and Asn-356 each carry an N-linked (GlcNAc...) asparagine glycan. Residues Asp-401 and His-441 each act as charge relay system in the active site.

The protein belongs to the tannase family.

Its subcellular location is the secreted. It catalyses the reaction feruloyl-polysaccharide + H2O = ferulate + polysaccharide.. Its function is as follows. Involved in degradation of plant cell walls. Hydrolyzes the feruloyl-arabinose ester bond in arabinoxylans as well as the feruloyl-galactose and feruloyl-arabinose ester bonds in pectin. The polypeptide is Probable feruloyl esterase B (faeB) (Emericella nidulans (strain FGSC A4 / ATCC 38163 / CBS 112.46 / NRRL 194 / M139) (Aspergillus nidulans)).